Consider the following 243-residue polypeptide: Thiamin pyrophosphokinase 1 (243 aa).

Belongs to the thiamine pyrophosphokinase family.

The catalysed reaction is thiamine + ATP = thiamine diphosphate + AMP + H(+). It functions in the pathway cofactor biosynthesis; thiamine diphosphate biosynthesis; thiamine diphosphate from thiamine: step 1/1. In terms of biological role, catalyzes the phosphorylation of thiamine to thiamine pyrophosphate. Functions cell non-autonomously. This is Thiamin pyrophosphokinase 1 from Caenorhabditis elegans.